The chain runs to 310 residues: Ribosomal RNA small subunit methyltransferase H (310 aa).

S-adenosyl-L-methionine is bound by residues 32–34, D52, F79, D100, and Q107; that span reads GGH.

This sequence belongs to the methyltransferase superfamily. RsmH family.

Its subcellular location is the cytoplasm. It catalyses the reaction cytidine(1402) in 16S rRNA + S-adenosyl-L-methionine = N(4)-methylcytidine(1402) in 16S rRNA + S-adenosyl-L-homocysteine + H(+). Functionally, specifically methylates the N4 position of cytidine in position 1402 (C1402) of 16S rRNA. This Bacillus cereus (strain G9842) protein is Ribosomal RNA small subunit methyltransferase H.